The sequence spans 653 residues: Macrolide export ATP-binding/permease protein MacB (653 aa).

Positions 6–244 constitute an ABC transporter domain; that stretch reads LQLTRVTRRF…DAAPDASGGA (239 aa). 42 to 49 is a binding site for ATP; it reads GASGSGKS. 4 consecutive transmembrane segments (helical) span residues 278–298, 526–546, 587–607, and 616–636; these read LLTM…VAIG, LTLL…IGVM, MGGA…SLFV, and AASI…FGFM.

It belongs to the ABC transporter superfamily. Macrolide exporter (TC 3.A.1.122) family. Homodimer.

Its subcellular location is the cell inner membrane. In terms of biological role, non-canonical ABC transporter that contains transmembrane domains (TMD), which form a pore in the inner membrane, and an ATP-binding domain (NBD), which is responsible for energy generation. Confers resistance against macrolides. The chain is Macrolide export ATP-binding/permease protein MacB from Burkholderia pseudomallei (strain 1710b).